A 237-amino-acid polypeptide reads, in one-letter code: EVKLVESGGGLVQPGGSLSLSCATSGFTFIDYYMSWFRQPPGKALEWLGLIRNKGNGYTMEYSASLKGRFTISRDNSQSIVYLHMNTLTAEDSATYYCARVDYGTNYDYWGQGTTLTVSSAKTTAPSVYPLAPVCGDTTGSSVTLGCLVKGYFPEPVTLTWNSGSLSSGVHTFPAVLQSDLYTLSSSVTVTSSTWPSQSITCNVAHPASSTKVDKKIEPRGPTIKPCPPCKCPAPNS.

2 consecutive Ig-like domains span residues 1-119 (EVKL…LTVS) and 126-218 (PSVY…KKIE). Cys-22 and Cys-98 form a disulfide bridge. The d segment stretch occupies residues 101–105 (VDYGT). The segment at 106–120 (NYDYWGQGTTLTVSS) is JH2 segment. Cys-147 and Cys-202 are oxidised to a cystine.

The protein resides in the secreted. Functionally, anti-influenza H3N2 neuraminidase antibody. This chain is Ig heavy chain Mem5, found in Mus musculus (Mouse).